A 1040-amino-acid chain; its full sequence is Vacuolar membrane protease (1040 aa).

Residues 1–9 (MINPISFRP) are Cytoplasmic-facing. Residues 10–30 (GPVTFWTTLIYLALLIPIVII) traverse the membrane as a helical segment. Residues 31-405 (NEEPPAAPKT…SFVLFGLRGM (375 aa)) lie on the Vacuolar side of the membrane. 4 N-linked (GlcNAc...) asparagine glycosylation sites follow: Asn-48, Asn-117, Asn-120, and Asn-129. His-186 and Asp-198 together coordinate Zn(2+). Glu-232 functions as the Proton acceptor in the catalytic mechanism. Residues Glu-233, Glu-258, and His-331 each coordinate Zn(2+). The helical transmembrane segment at 406–426 (FAWSLTLLIATPLILVGITWL) threads the bilayer. Topologically, residues 427–436 (LRNLDKDYFF) are cytoplasmic. Residues 437 to 456 (TSTVKTKEHPEYEAVPIGGW) form a helical membrane-spanning segment. Residues 457 to 462 (KGFFRW) lie on the Vacuolar side of the membrane. The chain crosses the membrane as a helical span at residues 463-483 (AMMVSIFYFSFWMIMRGANFV). Over 484 to 490 (RPSALHR) the chain is Cytoplasmic. Residues 491–511 (GYANLWLFVFGWIVLVAVTAL) form a helical membrane-spanning segment. The Vacuolar portion of the chain corresponds to 512-521 (EDRRRIAAGY). Residues 522-542 (IFVFLESAIFLSCLISFVELL) form a helical membrane-spanning segment. Residues 543–715 (ALPRKSAYAL…YEHEQDWSGH (173 aa)) are Cytoplasmic-facing. The tract at residues 563-680 (HSGYQGYRDS…NGTNDRGRTT (118 aa)) is disordered. Composition is skewed to low complexity over residues 577-594 (SSGA…PSSP) and 616-626 (APSVAAHSSQP). A compositionally biased stretch (polar residues) spans 636–647 (GRSTSAPIPSTT). The segment covering 650 to 661 (DEDESEDDDDEA) has biased composition (acidic residues). Residues 716-736 (LPSWAWFFQFLLLGPFMIILA) form a helical membrane-spanning segment. At 737 to 758 (AQTGLMLTDAVYQTGSDGSKLF) the chain is on the vacuolar side. Residues 759-779 (TPYLMIFFFTLLLILPLTPFI) form a helical membrane-spanning segment. The Cytoplasmic segment spans residues 780–785 (HRVTHH). The chain crosses the membrane as a helical span at residues 786 to 806 (IPVFLLVVFIVTLTYNLIAFP). The Vacuolar segment spans residues 807 to 1040 (FSANNRYKAF…VEGRKAFKIV (234 aa)). Residue Asn-900 is glycosylated (N-linked (GlcNAc...) asparagine).

This sequence belongs to the peptidase M28 family. It depends on Zn(2+) as a cofactor.

The protein resides in the vacuole membrane. May be involved in vacuolar sorting and osmoregulation. The sequence is that of Vacuolar membrane protease from Sordaria macrospora (strain ATCC MYA-333 / DSM 997 / K(L3346) / K-hell).